The sequence spans 284 residues: Steroidogenic acute regulatory protein, mitochondrial (284 aa).

The transit peptide at 1-62 directs the protein to the mitochondrion; that stretch reads MFLATFKLCA…RRSSLLGSQL (62 aa). Phosphoserine; by PKA is present on residues S56 and S194. In terms of domain architecture, START spans 66-279; that stretch reads LYSDQELSYI…LRKRLEASPA (214 aa).

As to quaternary structure, may interact with TSPO. In terms of tissue distribution, expressed within glia and neurons in discrete regions of the brain.

The protein localises to the mitochondrion. It carries out the reaction cholesterol(in) = cholesterol(out). The protein operates within steroid metabolism; cholesterol metabolism. In terms of biological role, plays a key role in steroid hormone synthesis by enhancing the metabolism of cholesterol into pregnenolone. Transporter that binds to and transport cholesterol through the intermembrane space of the mitochondrion. This is Steroidogenic acute regulatory protein, mitochondrial (Star) from Mus musculus (Mouse).